We begin with the raw amino-acid sequence, 348 residues long: NADH-quinone oxidoreductase subunit H (348 aa).

The next 8 membrane-spanning stretches (helical) occupy residues 21–41, 87–107, 120–140, 166–186, 195–215, 258–278, 288–308, and 325–345; these read IAGI…VIYV, GIFL…WAVI, VGLL…VMAG, IGFI…SEIV, GIVN…LFFI, NILL…LPPI, GFLW…WIWA, and VFLP…MATG.

It belongs to the complex I subunit 1 family. In terms of assembly, NDH-1 is composed of 14 different subunits. Subunits NuoA, H, J, K, L, M, N constitute the membrane sector of the complex.

The protein localises to the cell inner membrane. It catalyses the reaction a quinone + NADH + 5 H(+)(in) = a quinol + NAD(+) + 4 H(+)(out). In terms of biological role, NDH-1 shuttles electrons from NADH, via FMN and iron-sulfur (Fe-S) centers, to quinones in the respiratory chain. The immediate electron acceptor for the enzyme in this species is believed to be ubiquinone. Couples the redox reaction to proton translocation (for every two electrons transferred, four hydrogen ions are translocated across the cytoplasmic membrane), and thus conserves the redox energy in a proton gradient. This subunit may bind ubiquinone. In Erythrobacter litoralis (strain HTCC2594), this protein is NADH-quinone oxidoreductase subunit H.